Here is an 871-residue protein sequence, read N- to C-terminus: Dual O-methyltransferase/FAD-dependent monooxygenase CTB3 (871 aa).

The tract at residues 1–429 (MMQFQRDLEA…GLLTVRSAGQ (429 aa)) is O-methyltransferase. Position 279 (Asp279) interacts with S-adenosyl-L-methionine. His331 acts as the Proton acceptor in catalysis. The segment at 430–871 (TALSGTNTLT…NLVDCSEFVF (442 aa)) is FAD-dependent monooxygenase. Residues Glu485, Arg569, and Ala806 each contribute to the FAD site.

In the C-terminal section; belongs to the paxM FAD-dependent monooxygenase family. It in the N-terminal section; belongs to the class I-like SAM-binding methyltransferase superfamily. Cation-independent O-methyltransferase family. COMT subfamily.

It carries out the reaction nor-toralactone + S-adenosyl-L-methionine = toralactone + S-adenosyl-L-homocysteine + H(+). It catalyses the reaction toralactone + NADH + O2 + H(+) = 1-(3,4,5-trihydroxy-7-methoxynaphthalen-2-yl)propan-2-one + CO2 + NAD(+). The protein operates within mycotoxin biosynthesis. Dual O-methyltransferase/FAD-dependent monooxygenase; part of the gene cluster that mediates the biosynthesis of cercosporin, a light-activated, non-host-selective toxin. The perylenequinone chromophore of cercosporin absorbs light energy to attain an electronically-activated triplet state and produces active oxygen species such as the hydroxyl radical, superoxide, hydrogen peroxide or singlet oxygen upon reaction with oxygen molecules. These reactive oxygen species cause damage to various cellular components including lipids, proteins and nucleic acids. The first step of cercosporin biosynthesis is performed by the polyketide synthase CTB1 which catalyzes the formation of nor-toralactone. The starter unit acyltransferase (SAT) domain of CTB1 initiates polyketide extension by the selective utilization of acetyl-CoA, which is elongated to the heptaketide in the beta-ketoacyl synthase (KS) domain by successive condensations with six malonyl units introduced by the malonyl acyltransferase (MAT) domain. The product template (PT) domain catalyzes C4-C9 and C2-C11 aldol cyclizations and dehydrations to a trihydroxynaphthalene, which is thought to be delivered to the thioesterase (TE) domain for product release. The bifunctional enzyme CTB3 then methylates nor-toralactone to toralactone before conducting an unusual oxidative aromatic ring opening. The O-methyltransferase CTB2 further methylates the nascent OH-6 of the CBT3 product, blocking further oxidation at this site before the reductase CTB6 reduces the 2-oxopropyl ketone at position C7, giving naphthalene. The FAD-dependent monooxygenase CTB5 in concert with the multicopper oxidase CTB12 are responsible for homodimerization of naphthalene with CTB7 installing the dioxepine moiety, finally producing cercosporin. The fasciclin domain-containing protein CTB11 might act with CTB5 and CTB12 whereas the roles of CTB9 and CTB10 have still to be elucidated. The chain is Dual O-methyltransferase/FAD-dependent monooxygenase CTB3 from Cercospora nicotianae (Barn spot disease fungus).